The sequence spans 637 residues: Keratin, type II cytoskeletal 1 (637 aa).

Residues 1–187 (MSLQCSSRSL…DPQIQKVKSQ (187 aa)) form a head region. Arg-12 carries the post-translational modification Omega-N-methylarginine. Phosphoserine is present on residues Ser-21 and Ser-24. Arg-49 carries the omega-N-methylarginine modification. At Ser-67 the chain carries Phosphoserine. The stretch at 180-328 (QIQKVKSQER…DIDFFSALYQ (149 aa)) forms a coiled coil. The segment at 188-223 (EREQIKSLNDKFASFIDKVRFLEQQNQVLQTKWELL) is coil 1A. The IF rod domain occupies 188-501 (EREQIKSLND…KLLEGEEIRM (314 aa)). The interval 224–243 (QQVDTTTRTQNLDPFFENYI) is linker 1. Residues 244–334 (SILRRKVDSL…ALYQMEMSQM (91 aa)) are coil 1B. The residue at position 284 (Lys-284) is an N6,N6-dimethyllysine. Positions 335–358 (QTQISETNVVLSMDNNRSLDLDGI) are linker 12. A Phosphoserine modification is found at Ser-352. Positions 359 to 497 (ISEVKAQYDS…ATYKKLLEGE (139 aa)) are coil 2. Positions 397-483 (DSVRNTKMEI…QELMNTKLAL (87 aa)) form a coiled coil. The interval 498–637 (EIRMSGECTP…VSTSYSRGTK (140 aa)) is tail. Disordered stretches follow at residues 505–533 (CTPNVSVSVSTSHTSMSGSSSRGGGSGGG) and 563–637 (YGGG…RGTK). Over residues 509 to 524 (VSVSVSTSHTSMSGSS) the composition is skewed to low complexity. Omega-N-methylarginine occurs at positions 526, 585, and 607. The segment covering 563–618 (YGGGSGGGSYGGGSGGGSSGSHRGGSGGGGGSSGGSYGGSSGGGRGGSSSGGGGVK) has biased composition (gly residues). The segment covering 624 to 637 (TVKFVSTSYSRGTK) has biased composition (polar residues).

Belongs to the intermediate filament family. As to quaternary structure, heterotetramer of two type I and two type II keratins. Heterodimer with KRT10. Two heterodimers of KRT1 and KRT10 form a heterotetramer. Forms a heterodimer with KRT14; the interaction is more abundant in the absence of KRT5. Interacts with PLEC isoform 1C, when in a heterodimer with KRT10. Interacts with ITGB1 in the presence of RACK1 and SRC, and with RACK1. Interacts with C1QBP; the association represents a cell surface kininogen receptor. Interacts with EPPK1; interaction is dependent of higher-order structure of intermediate filament. In terms of processing, undergoes deimination of some arginine residues (citrullination). As to expression, expressed in the infundibular regions of the ear, the interfollicular epidermis of the back, in the interscale regions containing hair follicles in the tail, and in the soles of the footpads (at protein level).

It localises to the cell membrane. The protein resides in the cytoplasm. May regulate the activity of kinases such as PKC and SRC via binding to integrin beta-1 (ITB1) and the receptor of activated protein C kinase 1 (RACK1). In complex with C1QBP is a high affinity receptor for kininogen-1/HMWK. In Mus musculus (Mouse), this protein is Keratin, type II cytoskeletal 1 (Krt1).